Reading from the N-terminus, the 2091-residue chain is Protein Ycf2 (2091 aa).

Residues Asp191–Ser210 form a disordered region. Gly1432–Ser1439 is an ATP binding site.

This sequence belongs to the Ycf2 family.

Its subcellular location is the plastid. The protein resides in the chloroplast stroma. Probable ATPase of unknown function. Its presence in a non-photosynthetic plant (Epifagus virginiana) and experiments in tobacco indicate that it has an essential function which is probably not related to photosynthesis. In Daucus carota (Wild carrot), this protein is Protein Ycf2.